The chain runs to 197 residues: Probable chorismate pyruvate-lyase (197 aa).

The segment covering 1-14 (MRFDAADAHWRETP) has biased composition (basic and acidic residues). A disordered region spans residues 1–25 (MRFDAADAHWRETPRPGASGAQKDW). Substrate is bound by residues R73, L111, and E173.

Belongs to the UbiC family.

The protein localises to the cytoplasm. The enzyme catalyses chorismate = 4-hydroxybenzoate + pyruvate. It functions in the pathway cofactor biosynthesis; ubiquinone biosynthesis. Functionally, removes the pyruvyl group from chorismate, with concomitant aromatization of the ring, to provide 4-hydroxybenzoate (4HB) for the ubiquinone pathway. In Burkholderia thailandensis (strain ATCC 700388 / DSM 13276 / CCUG 48851 / CIP 106301 / E264), this protein is Probable chorismate pyruvate-lyase.